Reading from the N-terminus, the 181-residue chain is Oligoribonuclease (181 aa).

The Exonuclease domain maps to 8-171 (LIWIDMEMTG…ADIYDSIEEL (164 aa)). Tyr129 is a catalytic residue.

The protein belongs to the oligoribonuclease family.

It is found in the cytoplasm. In terms of biological role, 3'-to-5' exoribonuclease specific for small oligoribonucleotides. The polypeptide is Oligoribonuclease (Nitrosomonas eutropha (strain DSM 101675 / C91 / Nm57)).